The following is a 172-amino-acid chain: Co-chaperone protein HscB (172 aa).

One can recognise a J domain in the interval 2–74 (DYFTLFGLPI…LKRAEYMLSL (73 aa)).

The protein belongs to the HscB family. In terms of assembly, interacts with HscA and stimulates its ATPase activity. Interacts with IscU.

Co-chaperone involved in the maturation of iron-sulfur cluster-containing proteins. Seems to help targeting proteins to be folded toward HscA. The protein is Co-chaperone protein HscB of Pectobacterium carotovorum subsp. carotovorum (strain PC1).